Here is a 393-residue protein sequence, read N- to C-terminus: ATP phosphoribosyltransferase regulatory subunit (393 aa).

This sequence belongs to the class-II aminoacyl-tRNA synthetase family. HisZ subfamily. In terms of assembly, heteromultimer composed of HisG and HisZ subunits.

It localises to the cytoplasm. It participates in amino-acid biosynthesis; L-histidine biosynthesis; L-histidine from 5-phospho-alpha-D-ribose 1-diphosphate: step 1/9. Required for the first step of histidine biosynthesis. May allow the feedback regulation of ATP phosphoribosyltransferase activity by histidine. In Shouchella clausii (strain KSM-K16) (Alkalihalobacillus clausii), this protein is ATP phosphoribosyltransferase regulatory subunit.